Here is a 478-residue protein sequence, read N- to C-terminus: Glutamyl-tRNA reductase (478 aa).

Residues T49–R52, S109, E114–Q116, and Q120 contribute to the substrate site. Catalysis depends on C50, which acts as the Nucleophile. G191–G196 provides a ligand contact to NADP(+).

The protein belongs to the glutamyl-tRNA reductase family. In terms of assembly, homodimer.

It carries out the reaction (S)-4-amino-5-oxopentanoate + tRNA(Glu) + NADP(+) = L-glutamyl-tRNA(Glu) + NADPH + H(+). Its pathway is porphyrin-containing compound metabolism; protoporphyrin-IX biosynthesis; 5-aminolevulinate from L-glutamyl-tRNA(Glu): step 1/2. Catalyzes the NADPH-dependent reduction of glutamyl-tRNA(Glu) to glutamate 1-semialdehyde (GSA). The protein is Glutamyl-tRNA reductase of Rhodococcus opacus (strain B4).